A 117-amino-acid polypeptide reads, in one-letter code: Large ribosomal subunit protein uL22 (117 aa).

This sequence belongs to the universal ribosomal protein uL22 family. In terms of assembly, part of the 50S ribosomal subunit.

This protein binds specifically to 23S rRNA; its binding is stimulated by other ribosomal proteins, e.g. L4, L17, and L20. It is important during the early stages of 50S assembly. It makes multiple contacts with different domains of the 23S rRNA in the assembled 50S subunit and ribosome. Functionally, the globular domain of the protein is located near the polypeptide exit tunnel on the outside of the subunit, while an extended beta-hairpin is found that lines the wall of the exit tunnel in the center of the 70S ribosome. This is Large ribosomal subunit protein uL22 from Staphylococcus epidermidis (strain ATCC 35984 / DSM 28319 / BCRC 17069 / CCUG 31568 / BM 3577 / RP62A).